Consider the following 285-residue polypeptide: V-type proton ATPase subunit D (285 aa).

Basic and acidic residues predominate over residues 208-226 (QKTKENAEKADSVTKEEHQ). Positions 208–285 (QKTKENAEKA…ENDSDEEVIF (78 aa)) are disordered. Ser-219 is modified (phosphoserine). The segment covering 227-236 (GGSNTLQQTK) has biased composition (polar residues). Over residues 248–263 (VGKEVINEVENSKDDT) the composition is skewed to basic and acidic residues. Over residues 271-285 (TDDEEENDSDEEVIF) the composition is skewed to acidic residues.

The protein belongs to the V-ATPase D subunit family. As to quaternary structure, V-ATPase is a heteromultimeric enzyme composed of a peripheral catalytic V1 complex (components A to H) attached to an integral membrane V0 proton pore complex (components: a, c, c', c'', d, e, f and VOA1).

It is found in the vacuole membrane. In terms of biological role, subunit of the V1 complex of vacuolar(H+)-ATPase (V-ATPase), a multisubunit enzyme composed of a peripheral complex (V1) that hydrolyzes ATP and a membrane integral complex (V0) that translocates protons. V-ATPase is responsible for acidifying and maintaining the pH of intracellular compartments. This Schizosaccharomyces pombe (strain 972 / ATCC 24843) (Fission yeast) protein is V-type proton ATPase subunit D (vma8).